A 156-amino-acid polypeptide reads, in one-letter code: SsrA-binding protein (156 aa).

The disordered stretch occupies residues 127-156 (GKKKYDKREDLKKKDAKRDVDRAMRDRQKY). The segment covering 132–156 (DKREDLKKKDAKRDVDRAMRDRQKY) has biased composition (basic and acidic residues).

This sequence belongs to the SmpB family.

It is found in the cytoplasm. Its function is as follows. Required for rescue of stalled ribosomes mediated by trans-translation. Binds to transfer-messenger RNA (tmRNA), required for stable association of tmRNA with ribosomes. tmRNA and SmpB together mimic tRNA shape, replacing the anticodon stem-loop with SmpB. tmRNA is encoded by the ssrA gene; the 2 termini fold to resemble tRNA(Ala) and it encodes a 'tag peptide', a short internal open reading frame. During trans-translation Ala-aminoacylated tmRNA acts like a tRNA, entering the A-site of stalled ribosomes, displacing the stalled mRNA. The ribosome then switches to translate the ORF on the tmRNA; the nascent peptide is terminated with the 'tag peptide' encoded by the tmRNA and targeted for degradation. The ribosome is freed to recommence translation, which seems to be the essential function of trans-translation. In Exiguobacterium sp. (strain ATCC BAA-1283 / AT1b), this protein is SsrA-binding protein.